The primary structure comprises 798 residues: Transferrin receptor protein 2 (798 aa).

The Cytoplasmic portion of the chain corresponds to 1–81 (MEQRWGLLRR…WAAAGRKAAP (81 aa)). An Endocytosis signal motif is present at residues 23 to 26 (YRRV). The chain crosses the membrane as a helical; Signal-anchor for type II membrane protein span at residues 82 to 102 (YLVLITLLIFTGAFLLGYVAF). The Extracellular portion of the chain corresponds to 103 to 798 (RGSCQACGDS…GDVWNIDNNF (696 aa)). N-linked (GlcNAc...) asparagine glycans are attached at residues asparagine 235, asparagine 334, and asparagine 535.

This sequence belongs to the peptidase M28 family. M28B subfamily. As to expression, predominantly expressed in liver. Also expressed in kidney, spleen, brain, lung, heart and muscle with very low expression in kidney, muscle and heart.

The protein resides in the cell membrane. It localises to the cytoplasm. Mediates cellular uptake of transferrin-bound iron in a non-iron dependent manner. May be involved in iron metabolism, hepatocyte function and erythrocyte differentiation. This is Transferrin receptor protein 2 (Tfr2) from Mus musculus (Mouse).